The following is a 182-amino-acid chain: Inner membrane-spanning protein YciB (182 aa).

5 helical membrane passes run 20–42 (GGIY…WVYY), 55–75 (LIMI…TFIL), 76–96 (LKPT…AQFF), 123–143 (LNLA…YIAF), and 153–173 (FKLF…GFWM).

The protein belongs to the YciB family.

It is found in the cell inner membrane. Plays a role in cell envelope biogenesis, maintenance of cell envelope integrity and membrane homeostasis. The polypeptide is Inner membrane-spanning protein YciB (Polynucleobacter asymbioticus (strain DSM 18221 / CIP 109841 / QLW-P1DMWA-1) (Polynucleobacter necessarius subsp. asymbioticus)).